A 292-amino-acid chain; its full sequence is Ribosomal RNA small subunit methyltransferase A (292 aa).

Residues Asn-28, Leu-30, Gly-55, Glu-76, Asp-101, and Asn-126 each coordinate S-adenosyl-L-methionine.

Belongs to the class I-like SAM-binding methyltransferase superfamily. rRNA adenine N(6)-methyltransferase family. RsmA subfamily.

It is found in the cytoplasm. The enzyme catalyses adenosine(1518)/adenosine(1519) in 16S rRNA + 4 S-adenosyl-L-methionine = N(6)-dimethyladenosine(1518)/N(6)-dimethyladenosine(1519) in 16S rRNA + 4 S-adenosyl-L-homocysteine + 4 H(+). Functionally, specifically dimethylates two adjacent adenosines (A1518 and A1519) in the loop of a conserved hairpin near the 3'-end of 16S rRNA in the 30S particle. May play a critical role in biogenesis of 30S subunits. In Bacillus cytotoxicus (strain DSM 22905 / CIP 110041 / 391-98 / NVH 391-98), this protein is Ribosomal RNA small subunit methyltransferase A.